Reading from the N-terminus, the 307-residue chain is Elongation factor Ts (307 aa).

Positions 79 to 82 (TDFV) are involved in Mg(2+) ion dislocation from EF-Tu.

Belongs to the EF-Ts family.

The protein localises to the cytoplasm. Associates with the EF-Tu.GDP complex and induces the exchange of GDP to GTP. It remains bound to the aminoacyl-tRNA.EF-Tu.GTP complex up to the GTP hydrolysis stage on the ribosome. The chain is Elongation factor Ts from Sinorhizobium fredii (strain NBRC 101917 / NGR234).